Here is a 199-residue protein sequence, read N- to C-terminus: Holliday junction branch migration complex subunit RuvA (199 aa).

The tract at residues 1–62 (MIAYIKGLLA…EDGIQFFGFA (62 aa)) is domain I. Residues 63–141 (KEDEKECFLL…GMAAVEHSTL (79 aa)) are domain II. Residues 142 to 152 (QQSVITTGSGD) are flexible linker. The segment at 152–199 (DEAVEALLALGYSQGEARDAVKKAQKSAPEEDLSALIKIALKELAPSR) is domain III.

Belongs to the RuvA family. In terms of assembly, homotetramer. Forms an RuvA(8)-RuvB(12)-Holliday junction (HJ) complex. HJ DNA is sandwiched between 2 RuvA tetramers; dsDNA enters through RuvA and exits via RuvB. An RuvB hexamer assembles on each DNA strand where it exits the tetramer. Each RuvB hexamer is contacted by two RuvA subunits (via domain III) on 2 adjacent RuvB subunits; this complex drives branch migration. In the full resolvosome a probable DNA-RuvA(4)-RuvB(12)-RuvC(2) complex forms which resolves the HJ.

It localises to the cytoplasm. The RuvA-RuvB-RuvC complex processes Holliday junction (HJ) DNA during genetic recombination and DNA repair, while the RuvA-RuvB complex plays an important role in the rescue of blocked DNA replication forks via replication fork reversal (RFR). RuvA specifically binds to HJ cruciform DNA, conferring on it an open structure. The RuvB hexamer acts as an ATP-dependent pump, pulling dsDNA into and through the RuvAB complex. HJ branch migration allows RuvC to scan DNA until it finds its consensus sequence, where it cleaves and resolves the cruciform DNA. The chain is Holliday junction branch migration complex subunit RuvA from Desulforamulus reducens (strain ATCC BAA-1160 / DSM 100696 / MI-1) (Desulfotomaculum reducens).